A 574-amino-acid chain; its full sequence is Bifunctional NADP phosphatase/NAD kinase (574 aa).

The interval 1 to 297 (MVIMEGFKIA…KLIALFGNRW (297 aa)) is NADP phosphatase. Mg(2+)-binding residues include Glu-69, Asp-87, Ile-89, Asp-90, and Asp-243. The tract at residues 302 to 574 (VKFGIVVRED…NKLSRCLGIK (273 aa)) is NAD kinase. The Proton acceptor role is filled by Asp-362. NAD(+)-binding positions include 362 to 363 (DG), Arg-367, 436 to 437 (NE), Lys-447, Arg-464, Asp-466, and 477 to 482 (TAYSLS).

In the N-terminal section; belongs to the inositol monophosphatase superfamily. This sequence in the C-terminal section; belongs to the NAD kinase family. As to quaternary structure, homotetramer. It depends on Mg(2+) as a cofactor.

It localises to the cytoplasm. It carries out the reaction NAD(+) + ATP = ADP + NADP(+) + H(+). The enzyme catalyses NADP(+) + H2O = phosphate + NAD(+). It catalyses the reaction UTP + NAD(+) = UDP + NADP(+) + H(+). The catalysed reaction is 5-methyl-UTP + NAD(+) = 5-methyl-UDP + NADP(+) + H(+). It carries out the reaction CTP + NAD(+) = CDP + NADP(+) + H(+). The enzyme catalyses GTP + NAD(+) = GDP + NADP(+) + H(+). It catalyses the reaction dATP + NAD(+) = dADP + NADP(+) + H(+). The catalysed reaction is NADPH + H2O = phosphate + NADH. It carries out the reaction adenosine 2'-phosphate + H2O = adenosine + phosphate. The enzyme catalyses beta-D-fructose 1,6-bisphosphate + H2O = beta-D-fructose 6-phosphate + phosphate. Its activity is regulated as follows. Phosphatase activity is slightly inhibited by ADP, NADH and ATP, and moderately inhibited by NAD and 5'-AMP. Kinase activity is slightly inhibited by ADP and NADP. Involved in the regulation of the intracellular balance between NAD(H) and NADP(H), and is a key enzyme in the biosynthesis of NADP. Catalyzes the phosphorylation and dephosphorylation of NAD and NADP, respectively. Although it shows conflicting dual activities and is able to supply NADP, it seems that its physiological role is to prevent excess accumulation of NADP. Kinase can use ATP and other nucleoside triphosphates (UTP, TTP, CTP, GTP) as well as inorganic polyphosphate (poly(P)) as phosphoryl donors, however poly(P) is not considered to be the physiological phosphoryl donor. NAD is the preferred substrate for the kinase, but NADH can also be used as phosphoryl acceptor. Phosphatase can use NADP or NADPH as phosphoryl donor, but NADP is the preferred substrate. Phosphatase also has an activity toward the terminal phosphate group at C-2 of adenosine in 2'-AMP and toward the phosphate group at C-1 of fructose 1,6-bisphosphate, but not toward inositol 1-phosphate. This chain is Bifunctional NADP phosphatase/NAD kinase, found in Methanocaldococcus jannaschii (strain ATCC 43067 / DSM 2661 / JAL-1 / JCM 10045 / NBRC 100440) (Methanococcus jannaschii).